A 150-amino-acid polypeptide reads, in one-letter code: Lipoprotein signal peptidase (150 aa).

Transmembrane regions (helical) follow at residues 8–28, 58–78, and 81–101; these read FYAL…LAHA, GFSW…GWFL, and TTGS…NVFD. Catalysis depends on residues Asp-116 and Asp-132. Residues 126-146 form a helical membrane-spanning segment; sequence VVFNIADLFILAGVFGTFLFL.

This sequence belongs to the peptidase A8 family.

The protein localises to the cell membrane. The catalysed reaction is Release of signal peptides from bacterial membrane prolipoproteins. Hydrolyzes -Xaa-Yaa-Zaa-|-(S,diacylglyceryl)Cys-, in which Xaa is hydrophobic (preferably Leu), and Yaa (Ala or Ser) and Zaa (Gly or Ala) have small, neutral side chains.. The protein operates within protein modification; lipoprotein biosynthesis (signal peptide cleavage). In terms of biological role, this protein specifically catalyzes the removal of signal peptides from prolipoproteins. This is Lipoprotein signal peptidase from Tropheryma whipplei (strain TW08/27) (Whipple's bacillus).